Consider the following 522-residue polypeptide: DEAD-box ATP-dependent RNA helicase 1 (522 aa).

The Q motif motif lies at 30-59 (CALDTLPCLNPKLKKALENMGISSLFPVQV). One can recognise a Helicase ATP-binding domain in the interval 66–297 (IGPGGFERDI…QLDLHHPLFM (232 aa)). 79 to 86 (SPTGSGKT) contacts ATP. The DEAD box signature appears at 207–210 (DETD). In terms of domain architecture, Helicase C-terminal spans 325-475 (YLVALLKSWE…PIPPTSLDSI (151 aa)). The disordered stretch occupies residues 490–522 (VESEAPKKGRQAFRHNSRTGNSQTKLNKPRSEA). Over residues 497-506 (KGRQAFRHNS) the composition is skewed to basic residues.

This sequence belongs to the DEAD box helicase family. DDX51/DBP6 subfamily.

The catalysed reaction is ATP + H2O = ADP + phosphate + H(+). The protein is DEAD-box ATP-dependent RNA helicase 1 (RH1) of Arabidopsis thaliana (Mouse-ear cress).